The sequence spans 147 residues: MGTPASVVSEPPPWQAPIEARGRKQASANIFQDAELLQIQALFQRSGDQLAEERAQIIWECAGDHRVAEALKRLRRKRPPRQKPLGHSLHHCSRLRILEPHSALANPQSATETASSEQYLHSRKKSARIRRNWRKSGPTSYLHQIRH.

2 disordered regions span residues 1-24 and 104-147; these read MGTP…RGRK and LANP…QIRH. A compositionally biased stretch (polar residues) spans 105 to 119; that stretch reads ANPQSATETASSEQY. The segment covering 121–134 has biased composition (basic residues); the sequence is HSRKKSARIRRNWR. Over residues 137–147 the composition is skewed to polar residues; sequence GPTSYLHQIRH.

May be involved in MAP kinase activation, epithelial sodium channel (ENaC) down-regulation and cell cycling. The sequence is that of Arginine vasopressin-induced protein 1 (AVPI1) from Homo sapiens (Human).